We begin with the raw amino-acid sequence, 259 residues long: Protein FAM220A (259 aa).

As to quaternary structure, interacts with transcriptional activator STAT3; the interaction occurs in both the nucleus and the cytoplasm, is enhanced by IL6 and promotes STAT3 dephosphorylation, leading to negative regulation of STAT3 transcriptional activator activity. Can interact with both unphosphorylated and phosphorylated STAT3 but interacts preferentially with phosphorylated STAT3 in the nucleus. Interacts with protein phosphatase PTPN2/TC45; this promotes interaction of PTPN2 with STAT3, leading to dephosphorylation of STAT3 by PTPN2.

It localises to the nucleus. The protein localises to the cytoplasm. The protein resides in the cytoplasmic vesicle. Its subcellular location is the secretory vesicle. It is found in the acrosome. Functionally, promotes dephosphorylation of transcriptional activator STAT3 by interacting with both STAT3 and protein phosphatase PTPN2. This promotes interaction of PTPN2 with STAT3 and mediates STAT3 dephosphorylation by PTPN2, leading to negative regulation of STAT3 transcriptional activator activity. May be required for spermiogenesis or sperm function. In Macaca fascicularis (Crab-eating macaque), this protein is Protein FAM220A (FAM220A).